Reading from the N-terminus, the 287-residue chain is ATP synthase gamma chain (287 aa).

Belongs to the ATPase gamma chain family. F-type ATPases have 2 components, CF(1) - the catalytic core - and CF(0) - the membrane proton channel. CF(1) has five subunits: alpha(3), beta(3), gamma(1), delta(1), epsilon(1). CF(0) has three main subunits: a, b and c.

Its subcellular location is the cell inner membrane. Its function is as follows. Produces ATP from ADP in the presence of a proton gradient across the membrane. The gamma chain is believed to be important in regulating ATPase activity and the flow of protons through the CF(0) complex. This chain is ATP synthase gamma chain, found in Yersinia enterocolitica serotype O:8 / biotype 1B (strain NCTC 13174 / 8081).